Here is a 191-residue protein sequence, read N- to C-terminus: FMN reductase (NADH) RutF (191 aa).

This sequence belongs to the non-flavoprotein flavin reductase family. RutF subfamily.

The enzyme catalyses FMNH2 + NAD(+) = FMN + NADH + 2 H(+). Functionally, catalyzes the reduction of FMN to FMNH2 which is used to reduce pyrimidine by RutA via the Rut pathway. In Escherichia coli O1:K1 / APEC, this protein is FMN reductase (NADH) RutF.